The sequence spans 434 residues: Arrestin domain-containing protein 1 (434 aa).

The disordered stretch occupies residues 295–345; sequence PGPGSSPGLLSPVVPSAPPQEEAEAVASGPHFSDPVSLSTKSHSQQQPLST. Over residues 330–342 the composition is skewed to polar residues; the sequence is VSLSTKSHSQQQP. 2 consecutive short sequence motifs (PPxY motif) follow at residues 401 to 404 and 414 to 417; these read PPEY and PPSY.

It belongs to the arrestin family. In terms of assembly, interacts (via PPxY motifs) with ITCH (via WW domains); the interaction is direct and participates in the recruitment of the ubiquitin-protein ligase ITCH to the NOTCH1 receptor. Interacts with ARRB1 and ARRB2; the interaction is direct. Interacts with TSG101; may recruit TSG101 to the plasma membrane. Interacts (via PPxY motifs) with WWP2 (via WW domains); ubiquitinates ARRDC1. Interacts with SLC11A2; controls the incorporation of SLC11A2 into extracellular vesicles through an ubiquitination-dependent mechanism. Interacts with WWP1 (via WW domains). Interacts with NEDD4 (via WW domains). Interacts with PDCD6IP. Post-translationally, ubiquitinated. Ubiquitination by WWP2; promotes localization to extracellular microvesicles. Ubiquitinated by WWP1.

The protein resides in the cell membrane. Functions as an adapter recruiting ubiquitin-protein ligases to their specific substrates. Through an ubiquitination-dependent mechanism plays for instance a role in the incorporation of SLC11A2 into extracellular vesicles. More generally, plays a role in the extracellular transport of proteins between cells through the release in the extracellular space of microvesicles. By participating in the ITCH-mediated ubiquitination and subsequent degradation of NOTCH1, negatively regulates the NOTCH signaling pathway. The sequence is that of Arrestin domain-containing protein 1 from Rattus norvegicus (Rat).